The following is an 845-amino-acid chain: Molybdenum cofactor sulfurase (845 aa).

Lysine 240 is modified (N6-(pyridoxal phosphate)lysine). Residue cysteine 404 is part of the active site. In terms of domain architecture, MOSC spans 666-840 (SFPQDSSPSS…LMVGDTVTPS (175 aa)).

Belongs to the class-V pyridoxal-phosphate-dependent aminotransferase family. MOCOS subfamily. Pyridoxal 5'-phosphate serves as cofactor.

The enzyme catalyses Mo-molybdopterin + L-cysteine + AH2 = thio-Mo-molybdopterin + L-alanine + A + H2O. It functions in the pathway cofactor biosynthesis; molybdopterin biosynthesis. Sulfurates the molybdenum cofactor. Sulfation of molybdenum is essential for xanthine dehydrogenase (XDH) and aldehyde oxidase (ADO) enzymes in which molybdenum cofactor is liganded by 1 oxygen and 1 sulfur atom in active form. This is Molybdenum cofactor sulfurase from Aspergillus clavatus (strain ATCC 1007 / CBS 513.65 / DSM 816 / NCTC 3887 / NRRL 1 / QM 1276 / 107).